The primary structure comprises 143 residues: Acetyltransferase plu1384 (143 aa).

Residues 1–138 (MEIRVFRQDD…ESVIFSKRLI (138 aa)) form the N-acetyltransferase domain.

It belongs to the acetyltransferase family. YpeA subfamily.

This Photorhabdus laumondii subsp. laumondii (strain DSM 15139 / CIP 105565 / TT01) (Photorhabdus luminescens subsp. laumondii) protein is Acetyltransferase plu1384.